The following is a 367-amino-acid chain: GDP-perosamine synthase (367 aa).

At Lys-181 the chain carries N6-(pyridoxal phosphate)lysine.

It belongs to the DegT/DnrJ/EryC1 family. In terms of assembly, homotetramer. Pyridoxal 5'-phosphate serves as cofactor.

It catalyses the reaction GDP-alpha-D-perosamine + 2-oxoglutarate = GDP-4-dehydro-alpha-D-rhamnose + L-glutamate. It functions in the pathway bacterial outer membrane biogenesis; LPS O-antigen biosynthesis. In terms of biological role, catalyzes the synthesis of GDP-perosamine from GDP-4-keto-6-deoxy-D-mannose and L-glutamate. Also shows weak activity with L-glutamine. This chain is GDP-perosamine synthase, found in Vibrio cholerae.